The following is a 119-amino-acid chain: Beta-2-microglobulin (119 aa).

Residues 1–20 (MGRFVAVALLVLLSLSGLET) form the signal peptide. Residues 25–114 (PKIQVYSRHP…VTFSTPKTVK (90 aa)) form the Ig-like C1-type domain. The cysteines at positions 45 and 100 are disulfide-linked.

This sequence belongs to the beta-2-microglobulin family. In terms of assembly, heterodimer of an alpha chain and a beta chain. Beta-2-microglobulin is the beta-chain of major histocompatibility complex class I molecules.

Its subcellular location is the secreted. Its function is as follows. Component of the class I major histocompatibility complex (MHC). Involved in the presentation of peptide antigens to the immune system. This Callicebus personatus nigrifrons (Black-fronted titi) protein is Beta-2-microglobulin (B2M).